The sequence spans 539 residues: Probable 1,4-beta-D-glucan cellobiohydrolase B (539 aa).

Positions 1 to 26 (MLPSTISYRIYKNALFFAALFGAVQA) are cleaved as a signal peptide. A catalytic region spans residues 27 to 461 (QKVGTSKAEV…SNIKVGPIGS (435 aa)). Asparagine 90 carries an N-linked (GlcNAc...) asparagine glycan. Glutamate 238 functions as the Nucleophile in the catalytic mechanism. Glutamate 243 serves as the catalytic Proton donor. Asparagine 296 and asparagine 495 each carry an N-linked (GlcNAc...) asparagine glycan. The thr-rich linker stretch occupies residues 462–503 (TFNSGGSNPGGSTTTTKPATSTTTTKATTTATTNTTGPTGTG). Low complexity predominate over residues 462–503 (TFNSGGSNPGGSTTTTKPATSTTTTKATTTATTNTTGPTGTG). The segment at 462–504 (TFNSGGSNPGGSTTTTKPATSTTTTKATTTATTNTTGPTGTGV) is disordered. The region spanning 503–539 (GVAQPWAQCGGIGYSGPTQCAAPYTCTKQNDYYSQCL) is the CBM1 domain. 2 disulfides stabilise this stretch: cysteine 511/cysteine 528 and cysteine 522/cysteine 538.

Belongs to the glycosyl hydrolase 7 (cellulase C) family.

The protein resides in the secreted. It catalyses the reaction Hydrolysis of (1-&gt;4)-beta-D-glucosidic linkages in cellulose and cellotetraose, releasing cellobiose from the non-reducing ends of the chains.. Its function is as follows. The biological conversion of cellulose to glucose generally requires three types of hydrolytic enzymes: (1) Endoglucanases which cut internal beta-1,4-glucosidic bonds; (2) Exocellobiohydrolases that cut the disaccharide cellobiose from the non-reducing end of the cellulose polymer chain; (3) Beta-1,4-glucosidases which hydrolyze the cellobiose and other short cello-oligosaccharides to glucose. The polypeptide is Probable 1,4-beta-D-glucan cellobiohydrolase B (cbhB) (Aspergillus clavatus (strain ATCC 1007 / CBS 513.65 / DSM 816 / NCTC 3887 / NRRL 1 / QM 1276 / 107)).